A 499-amino-acid polypeptide reads, in one-letter code: Thioredoxin reductase 1, cytoplasmic (499 aa).

Residues 22–23, 42–43, 58–59, and 63–67 contribute to the FAD site; these read SG, DF, TC, and GCIPK. Cys59 and Cys64 are oxidised to a cystine. Lys68 bears the N6-succinyllysine mark. Residue Tyr131 is modified to Phosphotyrosine. FAD-binding positions include 131-132 and Thr161; that span reads YG. NADP(+)-binding positions include Arg166, 198–204, 221–222, Arg226, 226–228, 292–293, and Lys315; these read ASYVALE, RS, RGF, and GR. Tyr200 is an FAD binding site. FAD-binding positions include Asp334, 341–343, and His472; that span reads ELT. Residue Glu341 participates in NADP(+) binding. His472 acts as the Proton acceptor in catalysis. The segment at residues 497-498 is a cross-link (cysteinyl-selenocysteine (Cys-Sec)); the sequence is CU. Residue Sec498 is a non-standard amino acid, selenocysteine.

This sequence belongs to the class-I pyridine nucleotide-disulfide oxidoreductase family. In terms of assembly, homodimer. The cofactor is FAD. Post-translationally, ISGylated.

The protein localises to the cytoplasm. It carries out the reaction [thioredoxin]-dithiol + NADP(+) = [thioredoxin]-disulfide + NADPH + H(+). The catalysed reaction is H2O2 + NADPH + H(+) = NADP(+) + 2 H2O. Reduces disulfideprotein thioredoxin (Trx) to its dithiol-containing form. Homodimeric flavoprotein involved in the regulation of cellular redox reactions, growth and differentiation. Contains a selenocysteine residue at the C-terminal active site that is essential for catalysis. Also has reductase activity on hydrogen peroxide (H2O2). The chain is Thioredoxin reductase 1, cytoplasmic (TXNRD1) from Bos taurus (Bovine).